We begin with the raw amino-acid sequence, 155 residues long: RNA pyrophosphohydrolase (155 aa).

The region spanning lysine 5 to alanine 147 is the Nudix hydrolase domain. Residues glycine 42–glycine 63 carry the Nudix box motif.

It belongs to the Nudix hydrolase family. RppH subfamily. Requires a divalent metal cation as cofactor.

Functionally, accelerates the degradation of transcripts by removing pyrophosphate from the 5'-end of triphosphorylated RNA, leading to a more labile monophosphorylated state that can stimulate subsequent ribonuclease cleavage. This Helicobacter pylori (strain P12) protein is RNA pyrophosphohydrolase.